The chain runs to 162 residues: Crossover junction endodeoxyribonuclease RuvC (162 aa).

Residues D8, E69, and H141 contribute to the active site. D8, E69, and H141 together coordinate Mg(2+).

This sequence belongs to the RuvC family. In terms of assembly, homodimer which binds Holliday junction (HJ) DNA. The HJ becomes 2-fold symmetrical on binding to RuvC with unstacked arms; it has a different conformation from HJ DNA in complex with RuvA. In the full resolvosome a probable DNA-RuvA(4)-RuvB(12)-RuvC(2) complex forms which resolves the HJ. Requires Mg(2+) as cofactor.

The protein resides in the cytoplasm. It catalyses the reaction Endonucleolytic cleavage at a junction such as a reciprocal single-stranded crossover between two homologous DNA duplexes (Holliday junction).. Functionally, the RuvA-RuvB-RuvC complex processes Holliday junction (HJ) DNA during genetic recombination and DNA repair. Endonuclease that resolves HJ intermediates. Cleaves cruciform DNA by making single-stranded nicks across the HJ at symmetrical positions within the homologous arms, yielding a 5'-phosphate and a 3'-hydroxyl group; requires a central core of homology in the junction. The consensus cleavage sequence is 5'-(A/T)TT(C/G)-3'. Cleavage occurs on the 3'-side of the TT dinucleotide at the point of strand exchange. HJ branch migration catalyzed by RuvA-RuvB allows RuvC to scan DNA until it finds its consensus sequence, where it cleaves and resolves the cruciform DNA. The sequence is that of Crossover junction endodeoxyribonuclease RuvC from Wolbachia pipientis wMel.